The sequence spans 338 residues: Glyceraldehyde-3-phosphate dehydrogenase (338 aa).

Residues 13 to 14 (RI), Asp-35, and Arg-80 each bind NAD(+). Residues 151 to 153 (SCT), Thr-182, 211 to 212 (TG), and Arg-234 contribute to the D-glyceraldehyde 3-phosphate site. Cys-152 functions as the Nucleophile in the catalytic mechanism. Asn-317 serves as a coordination point for NAD(+).

The protein belongs to the glyceraldehyde-3-phosphate dehydrogenase family. As to quaternary structure, homotetramer.

Its subcellular location is the cytoplasm. It carries out the reaction D-glyceraldehyde 3-phosphate + phosphate + NAD(+) = (2R)-3-phospho-glyceroyl phosphate + NADH + H(+). It functions in the pathway carbohydrate degradation; glycolysis; pyruvate from D-glyceraldehyde 3-phosphate: step 1/5. In Aspergillus oryzae (strain ATCC 42149 / RIB 40) (Yellow koji mold), this protein is Glyceraldehyde-3-phosphate dehydrogenase (gpdA).